The sequence spans 558 residues: REST corepressor spr-1 (558 aa).

The tract at residues 1–106 (MDLYDDDGES…KVKGPLSNTN (106 aa)) is disordered. The span at 36 to 56 (TIEENVPEVEENTLLEEDSLV) shows a compositional bias: acidic residues. The segment covering 69–80 (KPSKSKRKRKRS) has biased composition (basic residues). Residues 107 to 192 (KEINVGTEFQ…SAIAEVARRN (86 aa)) enclose the ELM2 domain. Residues 193-244 (ELKDVWTDQEITLFENCYQIFGKNFSQIRSALCHRSLQSIVQFYYESKKRVK) enclose the SANT 1 domain. The segment at 271–325 (AIFESMCDNCGEKAENMQINNAMNRPECRACLIYFNQTGVPRPTSLRLVLAERIR) adopts a GATA-type zinc-finger fold. A compositionally biased stretch (polar residues) spans 378 to 402 (CTENGNVGETSSPSAQKTEIQSESD). The disordered stretch occupies residues 378 to 406 (CTENGNVGETSSPSAQKTEIQSESDGSGP). An SANT 2 domain is found at 481 to 532 (HYSQDWTQLERSQVIRCFNMYGAHFEHIADVIGTKTPDQVYQFYLENQKAID).

This sequence belongs to the CoREST family. As to quaternary structure, probably part of a large repressor complex. Interacts with histone demethylase spr-5/lsd-1.

It is found in the nucleus. In terms of biological role, probable corepressor protein, which probably participates in the transcriptional repression of the presenilin protein hop-1. Probably acts via the formation of a multiprotein complex that deacetylates and demethylates specific sites on histones. Acts redundantly with the transcriptional repressor lin-35 to play a role in vulval morphogenesis and promote germline proliferation. The chain is REST corepressor spr-1 from Caenorhabditis elegans.